Consider the following 292-residue polypeptide: Malonyl-[acyl-carrier protein] O-methyltransferase (292 aa).

This sequence belongs to the methyltransferase superfamily.

It catalyses the reaction malonyl-[ACP] + S-adenosyl-L-methionine = malonyl-[ACP] methyl ester + S-adenosyl-L-homocysteine. The protein operates within cofactor biosynthesis; biotin biosynthesis. Converts the free carboxyl group of a malonyl-thioester to its methyl ester by transfer of a methyl group from S-adenosyl-L-methionine (SAM). It allows to synthesize pimeloyl-ACP via the fatty acid synthetic pathway. This chain is Malonyl-[acyl-carrier protein] O-methyltransferase, found in Alcanivorax borkumensis (strain ATCC 700651 / DSM 11573 / NCIMB 13689 / SK2).